The following is an 803-amino-acid chain: Exocyst complex component 6 (803 aa).

Belongs to the SEC15 family. As to quaternary structure, the exocyst complex is composed of EXOC1, EXOC2, EXOC3, EXOC4, EXOC5, EXOC6, EXOC7 and EXOC8. Interacts with CNTRL. Interacts with RAB11A in a GTP-dependent manner.

It is found in the cytoplasm. Its subcellular location is the perinuclear region. The protein resides in the cell projection. The protein localises to the growth cone. It localises to the midbody. It is found in the midbody ring. Component of the exocyst complex involved in the docking of exocytic vesicles with fusion sites on the plasma membrane. Together with RAB11A, RAB3IP, RAB8A, PARD3, PRKCI, ANXA2, CDC42 and DNMBP promotes transcytosis of PODXL to the apical membrane initiation sites (AMIS), apical surface formation and lumenogenesis. The chain is Exocyst complex component 6 (EXOC6) from Canis lupus familiaris (Dog).